A 176-amino-acid chain; its full sequence is Ribosome maturation factor RimM (176 aa).

Residues 97-176 (GDEFYWRELV…TIQVDWDPSF (80 aa)) enclose the PRC barrel domain.

Belongs to the RimM family. As to quaternary structure, binds ribosomal protein uS19.

Its subcellular location is the cytoplasm. An accessory protein needed during the final step in the assembly of 30S ribosomal subunit, possibly for assembly of the head region. Essential for efficient processing of 16S rRNA. May be needed both before and after RbfA during the maturation of 16S rRNA. It has affinity for free ribosomal 30S subunits but not for 70S ribosomes. In Pseudoalteromonas atlantica (strain T6c / ATCC BAA-1087), this protein is Ribosome maturation factor RimM.